A 479-amino-acid chain; its full sequence is Serine--tRNA ligase, mitochondrial (479 aa).

A mitochondrion-targeting transit peptide spans 1–42 (MRLTNRRFSTFLGNALPSKKKGFIFMSQLLYLRTFSTHTSYL). Position 287 to 289 (287 to 289 (TAE)) interacts with L-serine. Position 317–319 (317–319 (RRE)) interacts with ATP. Residue Glu-340 participates in L-serine binding. An ATP-binding site is contributed by 404 to 407 (EITS). Thr-438 contributes to the L-serine binding site.

The protein belongs to the class-II aminoacyl-tRNA synthetase family. Type-1 seryl-tRNA synthetase subfamily. In terms of assembly, homodimer. The tRNA molecule probably binds across the dimer.

It is found in the mitochondrion matrix. It carries out the reaction tRNA(Ser) + L-serine + ATP = L-seryl-tRNA(Ser) + AMP + diphosphate + H(+). Functionally, catalyzes the attachment of serine to tRNA(Ser). Is also probably able to aminoacylate tRNA(Sec) with serine, to form the misacylated tRNA L-seryl-tRNA(Sec), which will be further converted into selenocysteinyl-tRNA(Sec). This is Serine--tRNA ligase, mitochondrial (dia4) from Schizosaccharomyces pombe (strain 972 / ATCC 24843) (Fission yeast).